Consider the following 1034-residue polypeptide: MGKAENYEMYSVELGPGPGGDMAAKMSKKKAGKGGGKKKEKLENMKKEMEINDHQLSVAELEQKYQTSATKGLSASLAADLLLRDGPNALRPPRGTPEYVKFARQLAGGLQCLMWVAAAICLIAFAIQASEGDLTTDDNLYLALALIAVVVVTGCFGYYQEFKSTNIIASFKNLVPQQATVIRDGDKFQINADQLVVGDLVEMKGGDRVPADIRILQAQGCKVDNSSLTGESEPQTRSPECTHESPLETRNIALFSTMCLEGTAQGLVVNTGDRTIIGRIASLASGVENEKTPIAIEIEHFVDIIAGLAILFGATFFVVAMCIGYTFLRAMVFFMAIVVAYVPEGLLATVTVCLSLTAKRLASKNCVVKNLEAVETLGSKSVICSDKTGTLTQNSMTVSNLWFDNHIHTADTTEDQSGQKFDQSSETWRALCRVLTLCNRAAFKSGQDAVPVPKRIVIGDASETALLKFSELTLGNAMGYRERFPKVCEIPFNSTNKFQLSIHTLEDPRDPRHVLVMKGAPERVLERCSSILIKGQELPLDEQWREAFQTAYLSLGGLGERVLGFCQLYLSEKDYPPGYAFDVEAMNFPTSGLCFAGLVSMIDPPRATVPDAVLKCRTAGIRVIMVTGDHPITAKAIAASVGIISEGSETVEDIAARLRVPVDQVNRKDARACVINGMQLKDMDPSELVEALRTHPEMVFARTSPQQKLVIVESCQRLGAIVAVTGDGVNDSPALKKADIGVAMGIAGSDAAKNAADMILLDDNFASIVTGVEQGRLIFDNLKKSIAYTLTKNIPELTPYLIYITVSVPLPLGCITILFIELCTDIFPSVSLAYEKAESDIMHLRPRNPKRDRLVNEPLAAYSYFQIGAIQSFAGFTDYFTAMAQEGWFPLLCVGLRPYWENHHLQDLQDSYGQEWTFGQRLYQQYTCYTVFFISIEMCQIADVLIRKTRRLSAFQQGFFRNRILVIAIVFQVCIGCFLCYCPGMPNIFNFMPIRYQWWLVPMPFGLLIFVYDEIRKLGVRCCPGSWWDQELYY.

Topologically, residues 1-97 are cytoplasmic; it reads MGKAENYEMY…NALRPPRGTP (97 aa). Residues Tyr7 and Tyr10 each carry the phosphotyrosine modification. The disordered stretch occupies residues 14-41; sequence LGPGPGGDMAAKMSKKKAGKGGGKKKEK. Residues 26–39 show a composition bias toward basic residues; sequence MSKKKAGKGGGKKK. Ser27 is subject to Phosphoserine. The helical transmembrane segment at 98–118 threads the bilayer; it reads EYVKFARQLAGGLQCLMWVAA. Residues 119 to 141 lie on the Lumenal side of the membrane; that stretch reads AICLIAFAIQASEGDLTTDDNLY. Residues 142–162 form a helical membrane-spanning segment; sequence LALALIAVVVVTGCFGYYQEF. The Cytoplasmic portion of the chain corresponds to 163-298; that stretch reads KSTNIIASFK…NEKTPIAIEI (136 aa). Polar residues predominate over residues 225 to 239; sequence NSSLTGESEPQTRSP. The interval 225–245 is disordered; it reads NSSLTGESEPQTRSPECTHES. Residues 299–318 form a helical membrane-spanning segment; it reads EHFVDIIAGLAILFGATFFV. Topologically, residues 319–330 are lumenal; the sequence is VAMCIGYTFLRA. A helical membrane pass occupies residues 331 to 348; sequence MVFFMAIVVAYVPEGLLA. K(+) contacts are provided by Val339, Ala340, Val342, and Glu344. At 349–782 the chain is on the cytoplasmic side; the sequence is TVTVCLSLTA…EQGRLIFDNL (434 aa). Residue Asp386 is the 4-aspartylphosphate intermediate of the active site. Positions 386 and 388 each coordinate Mg(2+). Phosphoserine occurs at positions 462 and 600. Asp727 and Asp731 together coordinate Mg(2+). Residues 783–802 form a helical membrane-spanning segment; that stretch reads KKSIAYTLTKNIPELTPYLI. Glu796 is a binding site for K(+). Residues 803–812 lie on the Lumenal side of the membrane; sequence YITVSVPLPL. The chain crosses the membrane as a helical span at residues 813 to 833; it reads GCITILFIELCTDIFPSVSLA. Glu821 is a binding site for K(+). Residues 834–853 lie on the Cytoplasmic side of the membrane; sequence YEKAESDIMHLRPRNPKRDR. Ser839 carries the post-translational modification Phosphoserine. A helical membrane pass occupies residues 854 to 876; sequence LVNEPLAAYSYFQIGAIQSFAGF. At 877–928 the chain is on the lumenal side; the sequence is TDYFTAMAQEGWFPLLCVGLRPYWENHHLQDLQDSYGQEWTFGQRLYQQYTC. A helical transmembrane segment spans residues 929–948; sequence YTVFFISIEMCQIADVLIRK. Residues 949 to 962 lie on the Cytoplasmic side of the membrane; the sequence is TRRLSAFQQGFFRN. Residue Ser953 is modified to Phosphoserine; by PKA. A helical transmembrane segment spans residues 963 to 981; that stretch reads RILVIAIVFQVCIGCFLCY. Residues 982–996 lie on the Lumenal side of the membrane; that stretch reads CPGMPNIFNFMPIRY. A helical membrane pass occupies residues 997–1017; the sequence is QWWLVPMPFGLLIFVYDEIRK. Residues 1018 to 1034 lie on the Cytoplasmic side of the membrane; sequence LGVRCCPGSWWDQELYY.

The protein belongs to the cation transport ATPase (P-type) (TC 3.A.3) family. Type IIC subfamily. As to quaternary structure, the gastric H(+)/K(+) ATPase pump is composed of the catalytic alpha subunit ATP4A and the regulatory beta subunit ATP4B. Interacts (via the P-domain) with ATP4B (via N-terminus); this interaction stabilizes the lumenal-open E2 conformation state and prevents the reverse reaction of the transport cycle.

It is found in the apical cell membrane. The enzyme catalyses K(+)(out) + ATP + H2O + H(+)(in) = K(+)(in) + ADP + phosphate + 2 H(+)(out). In terms of biological role, the catalytic subunit of the gastric H(+)/K(+) ATPase pump which transports H(+) ions in exchange for K(+) ions across the apical membrane of parietal cells. Uses ATP as an energy source to pump H(+) ions to the gastric lumen while transporting K(+) ion from the lumen into the cell. Remarkably generates a million-fold proton gradient across the gastric parietal cell membrane, acidifying the gastric juice down to pH 1. Within a transport cycle, the transfer of a H(+) ion across the membrane is coupled to ATP hydrolysis and is associated with a transient phosphorylation that shifts the pump conformation from inward-facing (E1) to outward-facing state (E2). The release of the H(+) ion in the stomach lumen is followed by binding of K(+) ion converting the pump conformation back to the E1 state. This chain is Potassium-transporting ATPase alpha chain 1 (ATP4A), found in Canis lupus familiaris (Dog).